Consider the following 520-residue polypeptide: 2-isopropylmalate synthase (520 aa).

A Pyruvate carboxyltransferase domain is found at 4–266; the sequence is VEFLDTTLRD…TSDIVLNETV (263 aa). Positions 13, 201, 203, and 237 each coordinate Mn(2+). Residues 390 to 520 form a regulatory domain region; that stretch reads HFGDLKLTSN…AVSFRDVPTN (131 aa).

It belongs to the alpha-IPM synthase/homocitrate synthase family. LeuA type 1 subfamily. As to quaternary structure, homodimer. Mn(2+) serves as cofactor.

It is found in the cytoplasm. It carries out the reaction 3-methyl-2-oxobutanoate + acetyl-CoA + H2O = (2S)-2-isopropylmalate + CoA + H(+). Its pathway is amino-acid biosynthesis; L-leucine biosynthesis; L-leucine from 3-methyl-2-oxobutanoate: step 1/4. In terms of biological role, catalyzes the condensation of the acetyl group of acetyl-CoA with 3-methyl-2-oxobutanoate (2-ketoisovalerate) to form 3-carboxy-3-hydroxy-4-methylpentanoate (2-isopropylmalate). The protein is 2-isopropylmalate synthase of Streptococcus gallolyticus (strain UCN34).